Here is a 486-residue protein sequence, read N- to C-terminus: ATP synthase subunit beta (486 aa).

164–171 (GGAGVGKT) lines the ATP pocket.

The protein belongs to the ATPase alpha/beta chains family. In terms of assembly, F-type ATPases have 2 components, CF(1) - the catalytic core - and CF(0) - the membrane proton channel. CF(1) has five subunits: alpha(3), beta(3), gamma(1), delta(1), epsilon(1). CF(0) has four main subunits: a(1), b(1), b'(1) and c(9-12).

The protein localises to the cellular thylakoid membrane. The enzyme catalyses ATP + H2O + 4 H(+)(in) = ADP + phosphate + 5 H(+)(out). In terms of biological role, produces ATP from ADP in the presence of a proton gradient across the membrane. The catalytic sites are hosted primarily by the beta subunits. The protein is ATP synthase subunit beta of Prochlorococcus marinus (strain MIT 9215).